Consider the following 95-residue polypeptide: Small ribosomal subunit protein bS6 (95 aa).

It belongs to the bacterial ribosomal protein bS6 family.

Binds together with bS18 to 16S ribosomal RNA. The polypeptide is Small ribosomal subunit protein bS6 (Bacillus licheniformis (strain ATCC 14580 / DSM 13 / JCM 2505 / CCUG 7422 / NBRC 12200 / NCIMB 9375 / NCTC 10341 / NRRL NRS-1264 / Gibson 46)).